The chain runs to 353 residues: Photosystem II protein D1 (353 aa).

An N-acetylthreonine modification is found at threonine 2. At threonine 2 the chain carries Phosphothreonine. The next 3 helical transmembrane spans lie at 29-46 (YIGW…TATS), 118-133 (HFLL…EWEL), and 142-156 (WIAV…AATA). Histidine 118 serves as a coordination point for chlorophyll a. Residue tyrosine 126 participates in pheophytin a binding. [CaMn4O5] cluster-binding residues include aspartate 170 and glutamate 189. Residues 197-218 (FHMLGVAGVFGGSLFSAMHGSL) traverse the membrane as a helical segment. Histidine 198 lines the chlorophyll a pocket. A quinone is bound by residues histidine 215 and 264–265 (SF). Histidine 215 is a binding site for Fe cation. Residue histidine 272 participates in Fe cation binding. Residues 274 to 288 (FLAAWPVVGIWFTAL) form a helical membrane-spanning segment. Positions 332, 333, 342, and 344 each coordinate [CaMn4O5] cluster. The propeptide occupies 345–353 (AVEANSIDG).

The protein belongs to the reaction center PufL/M/PsbA/D family. As to quaternary structure, PSII is composed of 1 copy each of membrane proteins PsbA, PsbB, PsbC, PsbD, PsbE, PsbF, PsbH, PsbI, PsbJ, PsbK, PsbL, PsbM, PsbT, PsbX, PsbY, PsbZ, Psb30/Ycf12, at least 3 peripheral proteins of the oxygen-evolving complex and a large number of cofactors. It forms dimeric complexes. The D1/D2 heterodimer binds P680, chlorophylls that are the primary electron donor of PSII, and subsequent electron acceptors. It shares a non-heme iron and each subunit binds pheophytin, quinone, additional chlorophylls, carotenoids and lipids. D1 provides most of the ligands for the Mn4-Ca-O5 cluster of the oxygen-evolving complex (OEC). There is also a Cl(-1) ion associated with D1 and D2, which is required for oxygen evolution. The PSII complex binds additional chlorophylls, carotenoids and specific lipids. serves as cofactor. Post-translationally, tyr-161 forms a radical intermediate that is referred to as redox-active TyrZ, YZ or Y-Z. C-terminally processed by CTPA; processing is essential to allow assembly of the oxygen-evolving complex and thus photosynthetic growth.

The protein resides in the plastid. It localises to the chloroplast thylakoid membrane. The catalysed reaction is 2 a plastoquinone + 4 hnu + 2 H2O = 2 a plastoquinol + O2. In terms of biological role, photosystem II (PSII) is a light-driven water:plastoquinone oxidoreductase that uses light energy to abstract electrons from H(2)O, generating O(2) and a proton gradient subsequently used for ATP formation. It consists of a core antenna complex that captures photons, and an electron transfer chain that converts photonic excitation into a charge separation. The D1/D2 (PsbA/PsbD) reaction center heterodimer binds P680, the primary electron donor of PSII as well as several subsequent electron acceptors. This chain is Photosystem II protein D1, found in Cryptomeria japonica (Japanese cedar).